We begin with the raw amino-acid sequence, 335 residues long: Glyceraldehyde-3-phosphate dehydrogenase 1 (335 aa).

Residues threonine 13–isoleucine 14 and glycine 111 contribute to the NAD(+) site. A D-glyceraldehyde 3-phosphate-binding site is contributed by serine 140 to asparagine 142. The active-site Nucleophile is cysteine 141. An NAD(+)-binding site is contributed by arginine 169. Residues threonine 171 and histidine 195–glycine 196 each bind D-glyceraldehyde 3-phosphate. NAD(+) is bound at residue glutamine 300.

This sequence belongs to the glyceraldehyde-3-phosphate dehydrogenase family. Homotetramer.

The protein resides in the cytoplasm. The enzyme catalyses D-glyceraldehyde 3-phosphate + phosphate + NADP(+) = (2R)-3-phospho-glyceroyl phosphate + NADPH + H(+). It catalyses the reaction D-glyceraldehyde 3-phosphate + phosphate + NAD(+) = (2R)-3-phospho-glyceroyl phosphate + NADH + H(+). It participates in carbohydrate degradation; glycolysis; pyruvate from D-glyceraldehyde 3-phosphate: step 1/5. The chain is Glyceraldehyde-3-phosphate dehydrogenase 1 (gapA) from Methanosarcina acetivorans (strain ATCC 35395 / DSM 2834 / JCM 12185 / C2A).